A 181-amino-acid polypeptide reads, in one-letter code: Ninjurin-B (181 aa).

Basic and acidic residues predominate over residues 1 to 10 (MDSGEVKISL). Residues 1–72 (MDSGEVKISL…SNKKCSSDLS (72 aa)) form a disordered region. The Extracellular segment spans residues 1–115 (MDSGEVKISL…YNDKASTYIY (115 aa)). Residues 12–26 (DSPSSGESFASTTSG) are compositionally biased toward polar residues. Over residues 33–49 (RDLDIQVHESHIKDDQF) the composition is skewed to basic and acidic residues. Residues 80-91 (NKNVAEGLMDIA) are helix alpha1. Positions 94 to 110 (SANANQLRFLITYNDKA) are helix alpha2. A helical transmembrane segment spans residues 116–136 (SMIMVILSLVLQLLVGIMLIF). Residues 137–153 (KRRLKRFRNRSYERTND) are Cytoplasmic-facing. The helical transmembrane segment at 154 to 174 (LLVMGVFMITVINILLAAFTT) threads the bilayer. Residues 175 to 181 (TDGGGSH) lie on the Extracellular side of the membrane.

It belongs to the ninjurin family.

It is found in the membrane. In terms of biological role, effector of non-apoptotic necrotic cell death that mediates plasma membrane rupture (cytolysis): oligomerizes in response to death stimuli and promotes plasma membrane rupture by introducing hydrophilic faces of 2 alpha helices into the hydrophobic membrane, leading to release intracellular molecules that propagate the inflammatory response. Also acts as a homophilic transmembrane adhesion molecule that promotes cell adhesion by mediating homophilic interactions via its extracellular region. This is Ninjurin-B from Drosophila melanogaster (Fruit fly).